A 618-amino-acid polypeptide reads, in one-letter code: Sulfite reductase [NADPH] flavoprotein alpha-component (618 aa).

The Flavodoxin-like domain occupies 64–202 (VTLISASQTG…QAQQWRQQVV (139 aa)). FMN contacts are provided by residues 70-75 (SQTGNA), 117-120 (STQG), and 153-162 (LGDTSYEHFC). The 215-residue stretch at 253 to 467 (TAPLTAQLSV…IEHNDNFRLP (215 aa)) folds into the FAD-binding FR-type domain. Residues threonine 341, lysine 375, 405 to 408 (RLYS), 423 to 425 (TVG), tyrosine 429, and 438 to 441 (GGAS) each bind FAD. NADP(+) contacts are provided by residues 538–539 (SR), 544–548 (KIYVQ), and aspartate 580. FAD is bound at residue tyrosine 618.

Belongs to the NADPH-dependent sulphite reductase flavoprotein subunit CysJ family. The protein in the N-terminal section; belongs to the flavodoxin family. It in the C-terminal section; belongs to the flavoprotein pyridine nucleotide cytochrome reductase family. Alpha(8)-beta(8). The alpha component is a flavoprotein, the beta component is a hemoprotein. Requires FAD as cofactor. The cofactor is FMN.

The enzyme catalyses hydrogen sulfide + 3 NADP(+) + 3 H2O = sulfite + 3 NADPH + 4 H(+). The protein operates within sulfur metabolism; hydrogen sulfide biosynthesis; hydrogen sulfide from sulfite (NADPH route): step 1/1. Its function is as follows. Component of the sulfite reductase complex that catalyzes the 6-electron reduction of sulfite to sulfide. This is one of several activities required for the biosynthesis of L-cysteine from sulfate. The flavoprotein component catalyzes the electron flow from NADPH -&gt; FAD -&gt; FMN to the hemoprotein component. The chain is Sulfite reductase [NADPH] flavoprotein alpha-component from Yersinia pseudotuberculosis serotype I (strain IP32953).